The following is a 278-amino-acid chain: HTH-type transcriptional activator RhaS (278 aa).

An HTH araC/xylS-type domain is found at Asn174–Gly272. DNA-binding regions (H-T-H motif) lie at residues Glu191–Thr212 and Val239–Phe262.

In terms of assembly, binds DNA as a dimer.

The protein resides in the cytoplasm. Activates expression of the rhaBAD and rhaT operons. This Enterobacter sp. (strain 638) protein is HTH-type transcriptional activator RhaS.